The following is a 430-amino-acid chain: tRNA-2-methylthio-N(6)-dimethylallyladenosine synthase (430 aa).

In terms of domain architecture, MTTase N-terminal spans Lys-2 to Asn-111. The [4Fe-4S] cluster site is built by Cys-11, Cys-47, Cys-76, Cys-147, Cys-151, and Cys-154. Residues Arg-133–Gln-364 enclose the Radical SAM core domain. One can recognise a TRAM domain in the interval Glu-367–Lys-428.

The protein belongs to the methylthiotransferase family. MiaB subfamily. In terms of assembly, monomer. [4Fe-4S] cluster serves as cofactor.

Its subcellular location is the cytoplasm. It catalyses the reaction N(6)-dimethylallyladenosine(37) in tRNA + (sulfur carrier)-SH + AH2 + 2 S-adenosyl-L-methionine = 2-methylsulfanyl-N(6)-dimethylallyladenosine(37) in tRNA + (sulfur carrier)-H + 5'-deoxyadenosine + L-methionine + A + S-adenosyl-L-homocysteine + 2 H(+). Catalyzes the methylthiolation of N6-(dimethylallyl)adenosine (i(6)A), leading to the formation of 2-methylthio-N6-(dimethylallyl)adenosine (ms(2)i(6)A) at position 37 in tRNAs that read codons beginning with uridine. The protein is tRNA-2-methylthio-N(6)-dimethylallyladenosine synthase of Thermosipho melanesiensis (strain DSM 12029 / CIP 104789 / BI429).